The sequence spans 103 residues: Pyrimidine/purine nucleoside phosphorylase (103 aa).

The protein belongs to the nucleoside phosphorylase PpnP family.

It carries out the reaction a purine D-ribonucleoside + phosphate = a purine nucleobase + alpha-D-ribose 1-phosphate. It catalyses the reaction adenosine + phosphate = alpha-D-ribose 1-phosphate + adenine. The enzyme catalyses cytidine + phosphate = cytosine + alpha-D-ribose 1-phosphate. The catalysed reaction is guanosine + phosphate = alpha-D-ribose 1-phosphate + guanine. It carries out the reaction inosine + phosphate = alpha-D-ribose 1-phosphate + hypoxanthine. It catalyses the reaction thymidine + phosphate = 2-deoxy-alpha-D-ribose 1-phosphate + thymine. The enzyme catalyses uridine + phosphate = alpha-D-ribose 1-phosphate + uracil. The catalysed reaction is xanthosine + phosphate = alpha-D-ribose 1-phosphate + xanthine. In terms of biological role, catalyzes the phosphorolysis of diverse nucleosides, yielding D-ribose 1-phosphate and the respective free bases. Can use uridine, adenosine, guanosine, cytidine, thymidine, inosine and xanthosine as substrates. Also catalyzes the reverse reactions. This is Pyrimidine/purine nucleoside phosphorylase from Shewanella frigidimarina (strain NCIMB 400).